We begin with the raw amino-acid sequence, 619 residues long: ATP-dependent RNA helicase abstrakt (619 aa).

Residues 1–11 show a composition bias toward basic residues; it reads MAHVKRYRRSS. 2 disordered regions span residues 1–25 and 50–69; these read MAHV…EDYV and ETAQ…SQGA. Phosphoserine is present on residues S11, S13, S14, S56, S57, S58, and S66. Residues 177-205 carry the Q motif motif; the sequence is RSFREMKFPKGILNGLAAKGIKNPTPIQV. Positions 208–392 constitute a Helicase ATP-binding domain; the sequence is LPTVLAGRDL…RSALVKPVTI (185 aa). 221–228 contacts ATP; that stretch reads AFTGSGKT. A DEAD box motif is present at residues 340–343; that stretch reads DEAD. The Helicase C-terminal domain maps to 403–563; that stretch reads NVTQQVEYVK…EVPDFLDELA (161 aa). Residues 577-594 form a CCHC-type zinc finger; sequence HGCTYCGGLGHRITECPK.

The protein belongs to the DEAD box helicase family. DDX41 subfamily.

The protein resides in the nucleus. It carries out the reaction ATP + H2O = ADP + phosphate + H(+). ATP-dependent RNA helicase. Is essential for the directed and fasciculated early outgrowth of the bolwig nerves, as well as for its navigation at later stages. Is required during post-transcriptional gene expression. Plays a role during morphogenetic process, apoptosis and the establishment of cell polarity. This Drosophila melanogaster (Fruit fly) protein is ATP-dependent RNA helicase abstrakt (abs).